Reading from the N-terminus, the 910-residue chain is E3 ubiquitin-protein ligase MARCHF6 (910 aa).

The residue at position 1 (Met-1) is an N-acetylmethionine. The RING-CH-type zinc finger occupies 1-62 (MDTAEEDICR…ELCKHRFAFT (62 aa)). Topologically, residues 1-91 (MDTAEEDICR…LVTSIGTAIR (91 aa)) are cytoplasmic. Residues Cys-9, Cys-12, Cys-26, Cys-28, His-36, Cys-39, Cys-52, and Cys-55 each contribute to the Zn(2+) site. Residues 92–112 (YWFHYTLVAFAWLGVVPLTAC) traverse the membrane as a helical segment. Over 113-142 (RIYKCLFTGSVSSLLTLPLDMLSTENLLAD) the chain is Extracellular. Residues 143–163 (CLQGCFVVTCTLCAFISLVWL) traverse the membrane as a helical segment. Over 164–283 (REQIVHGGAP…WERMLGLDGS (120 aa)) the chain is Cytoplasmic. The segment at 185–256 (AAGHHQNEAP…AADANNGAQD (72 aa)) is disordered. Residues 223 to 248 (DAQDDQAEEEEEDNEEEDDAGVEDAA) are compositionally biased toward acidic residues. The chain crosses the membrane as a helical span at residues 284–304 (LVFLEHVFWVVSLNTLFILVF). The Extracellular portion of the chain corresponds to 305–336 (AFCPYHIGHFSLVGLGFEEHVQASHFEGLITT). The helical transmembrane segment at 337-357 (IVGYILLAITLIICHGLATLV) threads the bilayer. Over 358–376 (KFHRSRRLLGVCYIVVKVS) the chain is Cytoplasmic. A helical membrane pass occupies residues 377 to 397 (LLVVVEIGVFPLICGWWLDIC). The Extracellular segment spans residues 398–421 (SLEMFDATLKDRELSFQSAPGTTM). A helical transmembrane segment spans residues 422–442 (FLHWLVGMVYVFYFASFILLL). Topologically, residues 443–480 (REVLRPGVLWFLRNLNDPDFNPVQEMIHLPIYRHLRRF) are cytoplasmic. A helical membrane pass occupies residues 481 to 501 (ILSVIVFGSIVLLMLWLPIRI). The Extracellular segment spans residues 502–519 (IKSVLPNFLPYNVMLYSD). A helical membrane pass occupies residues 520–540 (APVSELSLELLLLQVVLPALL). Over 541-632 (EQGHTRQWLK…YRRPLNFPLR (92 aa)) the chain is Cytoplasmic. The helical transmembrane segment at 633–653 (IFLLIVFMCITLLIASLICLT) threads the bilayer. The Extracellular segment spans residues 654–678 (LPVFAGRWLMSFWTGTAKIHELYTA). Residues 679-699 (ACGLYVCWLTIRAVTVMVAWM) traverse the membrane as a helical segment. The Cytoplasmic segment spans residues 700 to 721 (PQGRRVIFQKVKEWSLMIMKTL). Residues 722-742 (IVAVLLAGVVPLLLGLLFELV) form a helical membrane-spanning segment. Residues 743–764 (IVAPLRVPLDQTPLFYPWQDWA) are Extracellular-facing. A helical transmembrane segment spans residues 765-785 (LGVLHAKIIAAITLMGPQWWL). The Cytoplasmic portion of the chain corresponds to 786–815 (KTVIEQVYANGIRNIDLHYIVRKLAAPVIS). A helical transmembrane segment spans residues 816-836 (VLLLSLCVPYVIASGVVPLLG). Over 837–848 (VTAEMQNLVHRR) the chain is Extracellular. Residues 849 to 869 (IYPFLLMVVVLMAILSFQVRQ) traverse the membrane as a helical segment. Residues 870–910 (FKRLYEHIKNDKYLVGQRLVNYERKSGKQGSSPPPPQSSQE) lie on the Cytoplasmic side of the membrane.

As to quaternary structure, interacts with DIO2. Interacts with SQLE. Auto-ubiquitinated, which results in proteasomal degradation. Deubiquitinated by USP19; protecting MARCHF6 from p97-mediated proteasomal degradation. Present in brain (at protein level).

It localises to the endoplasmic reticulum membrane. It carries out the reaction S-ubiquitinyl-[E2 ubiquitin-conjugating enzyme]-L-cysteine + [acceptor protein]-L-lysine = [E2 ubiquitin-conjugating enzyme]-L-cysteine + N(6)-ubiquitinyl-[acceptor protein]-L-lysine.. It participates in protein modification; protein ubiquitination. In terms of biological role, endoplasmic reticulum membrane-associated E3 ubiquitin ligase that plays a critical role in mitigating endoplasmic reticulum stress, the regulation of cholesterol and lipid homeostasis, and ferroptosis. Acts as a pivotal component of both the Ac/N-degron pathway (targeting the N-terminal acetyl group of substrates) and the ER-associated protein degradation-cytosol (ERAD-C) pathway (targeting misfolded substrates). For instance, mediates the degradation of Ac/N-degron-bearing proteins such as the G-protein regulator RGS2 and the lipid droplet protein PLIN2. Suppresses endoplasmic reticulum stress and ferroptosis through cytosolic POMC degradation. Prevents ferroptosis by acting as a NADPH sensor during lipid peroxidation through its C-terminal regulatory region. Facilitates also the degradation of selected endoplasmic reticulum proteins by associating with signal peptide peptidase for the turnover of endogenous tail-anchored proteins. Promotes ubiquitination of DIO2, leading to its degradation. By ubiquitinating and thereby modulating the stability of many proteins of the cholesterol pathway including SQLE, CYP51A1, CYP11A1 and HMGCR, acts as a crucial post-translational regulator of cholesterol synthesis. The chain is E3 ubiquitin-protein ligase MARCHF6 from Homo sapiens (Human).